Here is a 288-residue protein sequence, read N- to C-terminus: ATP synthase gamma chain (288 aa).

Belongs to the ATPase gamma chain family. In terms of assembly, F-type ATPases have 2 components, CF(1) - the catalytic core - and CF(0) - the membrane proton channel. CF(1) has five subunits: alpha(3), beta(3), gamma(1), delta(1), epsilon(1). CF(0) has three main subunits: a, b and c.

The protein localises to the cell inner membrane. Functionally, produces ATP from ADP in the presence of a proton gradient across the membrane. The gamma chain is believed to be important in regulating ATPase activity and the flow of protons through the CF(0) complex. This Rickettsia akari (strain Hartford) protein is ATP synthase gamma chain.